The primary structure comprises 76 residues: Cold shock-like protein CspD (76 aa).

In terms of domain architecture, CSD spans 7–67; sequence GTVKWFNNAK…GPKGYHASCV (61 aa).

Its subcellular location is the cytoplasm. The polypeptide is Cold shock-like protein CspD (cspD) (Vibrio cholerae serotype O1 (strain ATCC 39315 / El Tor Inaba N16961)).